An 86-amino-acid chain; its full sequence is Large ribosomal subunit protein bL27 (86 aa).

Positions 1-22 (MATKKAGGSSRNGRDSAGRRLG) are disordered.

This sequence belongs to the bacterial ribosomal protein bL27 family.

In Rickettsia peacockii (strain Rustic), this protein is Large ribosomal subunit protein bL27.